Consider the following 153-residue polypeptide: MPPSGLELMNGQVLPAFLLCSALLVIKMYVVAVITGQVRLRKKAFANPEDAQRHGGLQYCRNDPDVERCLRAHRNDMETIYPFLFLGFVYSFLGPNPFVARMHFLVFFLGRMVHTVAYLGKLRAPTRSLAYTLAQLPCASMALQIVWEAARHL.

At 1–13 (MPPSGLELMNGQV) the chain is on the lumenal side. A helical transmembrane segment spans residues 14 to 42 (LPAFLLCSALLVIKMYVVAVITGQVRLRK). Residue Arg39 participates in glutathione binding. Over 43-61 (KAFANPEDAQRHGGLQYCR) the chain is Cytoplasmic. The chain crosses the membrane as a helical span at residues 62 to 91 (NDPDVERCLRAHRNDMETIYPFLFLGFVYS). A glutathione-binding site is contributed by 74 to 78 (RNDME). Topologically, residues 92–96 (FLGPN) are lumenal. The chain crosses the membrane as a helical span at residues 97–120 (PFVARMHFLVFFLGRMVHTVAYLG). Residues His114 and Tyr118 each contribute to the glutathione site. The Cytoplasmic segment spans residues 121–124 (KLRA). The chain crosses the membrane as a helical span at residues 125–153 (PTRSLAYTLAQLPCASMALQIVWEAARHL). 127 to 131 (RSLAY) lines the glutathione pocket.

The protein belongs to the MAPEG family. Homotrimer. Glutathione is required as a cofactor.

Its subcellular location is the membrane. It is found in the cytoplasm. The protein resides in the perinuclear region. The catalysed reaction is prostaglandin H2 = prostaglandin E2. It carries out the reaction 2-glyceryl-prostaglandin H2 = 2-glyceryl-prostaglandin E2. The enzyme catalyses prostaglandin G2 = (15S)-15-hydroperoxy-prostaglandin E2. It catalyses the reaction 1-chloro-2,4-dinitrobenzene + glutathione = 2,4-dinitrophenyl-S-glutathione + chloride + H(+). The catalysed reaction is (5S)-hydroperoxy-(6E,8Z,11Z,14Z)-eicosatetraenoate + 2 glutathione = (5S)-hydroxy-(6E,8Z,11Z,14Z)-eicosatetraenoate + glutathione disulfide + H2O. It participates in lipid metabolism; prostaglandin biosynthesis. Terminal enzyme of the cyclooxygenase (COX)-2-mediated prostaglandin E2 (PGE2) biosynthetic pathway. Catalyzes the glutathione-dependent oxidoreduction of prostaglandin endoperoxide H2 (PGH2) to prostaglandin E2 (PGE2) in response to inflammatory stimuli. Plays a key role in inflammation response, fever and pain. Also catalyzes the oxidoreduction of endocannabinoids into prostaglandin glycerol esters and PGG2 into 15-hydroperoxy-PGE2. In addition, displays low glutathione transferase and glutathione-dependent peroxidase activities, toward 1-chloro-2,4-dinitrobenzene and 5-hydroperoxyicosatetraenoic acid (5-HPETE), respectively. The protein is Prostaglandin E synthase (PTGES) of Bos taurus (Bovine).